The sequence spans 377 residues: Presenilin-associated rhomboid-like protein, mitochondrial (377 aa).

Residues 1–50 constitute a mitochondrion transit peptide; it reads MALYSWVQRGWRCGQTWAPLLGGGYRELSATQARQLLGRRFNLLLQQKCG. At 51–95 the chain is on the mitochondrial matrix side; that stretch reads FRKAPRKVEPRRSDTGSSGEAYKRSALIPPLEETVFYPSPYPVRT. Phosphoserine occurs at positions 63 and 68. The helical transmembrane segment at 96-116 threads the bilayer; it reads LLKPFFFTVGFTGCAFGSAAI. At 117–165 the chain is on the mitochondrial intermembrane side; that stretch reads WQYESLKSRVQSYFDGIKADWLDSIRPQKEGNLRKEINKWWNSLSDGQR. The chain crosses the membrane as a helical span at residues 166 to 186; that stretch reads TVTGIIAANALVFCLWRVPSL. Residues 187–214 lie on the Mitochondrial matrix side of the membrane; the sequence is HRTMIRYFTSNPASKVLCSPMLLSTFSH. The helical transmembrane segment at 215–235 threads the bilayer; it reads FSLFHMAANMYVLWSFSTSIV. The Mitochondrial intermembrane portion of the chain corresponds to 236-242; sequence NILGQEQ. A helical membrane pass occupies residues 243-263; it reads FVAVYLSAGVISNFVSYVCKV. Over 264-268 the chain is Mitochondrial matrix; sequence ATGRY. Residues 269–289 traverse the membrane as a helical segment; it reads GPSLGASGAIMTVLAAVCTKI. Catalysis depends on Ser-275, which acts as the Nucleophile. Over 290-293 the chain is Mitochondrial intermembrane; that stretch reads PEGR. A helical transmembrane segment spans residues 294–314; that stretch reads LAIIFLPVFTFTAGNALKAII. Residues 315–331 are Mitochondrial matrix-facing; it reads AMDTAGMILGWKFFDHA. A helical transmembrane segment spans residues 332 to 352; the sequence is AHLGGALFGIWYITYGHELIW. The active site involves His-333. Over 353–377 the chain is Mitochondrial intermembrane; it reads KNREPLVKIWHEIRTNGPKKGGGSK.

Belongs to the peptidase S54 family. In terms of assembly, interacts with PSEN1 and PSEN2. Binds OPA1. P-beta is proteolytically processed (beta-cleavage) in a PARL-dependent manner.

It is found in the mitochondrion inner membrane. The protein localises to the nucleus. The enzyme catalyses Cleaves type-1 transmembrane domains using a catalytic dyad composed of serine and histidine that are contributed by different transmembrane domains.. In terms of biological role, required for the control of apoptosis during postnatal growth. Essential for proteolytic processing of an antiapoptotic form of OPA1 which prevents the release of mitochondrial cytochrome c in response to intrinsic apoptotic signals. Required for the maturation of PINK1 into its 52kDa mature form after its cleavage by mitochondrial-processing peptidase (MPP). Promotes cleavage of serine/threonine-protein phosphatase PGAM5 in damaged mitochondria in response to loss of mitochondrial membrane potential. Mediates differential cleavage of PINK1 and PGAM5 depending on the health status of mitochondria, disassociating from PINK1 and associating with PGAM5 in response to mitochondrial membrane potential loss. Required for processing of CLPB into a form with higher protein disaggregase activity by removing an autoinhibitory N-terminal peptide. Promotes processing of DIABLO/SMAC in the mitochondrion which is required for DIABLO apoptotic activity. Also required for cleavage of STARD7 and TTC19. Promotes changes in mitochondria morphology regulated by phosphorylation of P-beta domain. This chain is Presenilin-associated rhomboid-like protein, mitochondrial, found in Rattus norvegicus (Rat).